The primary structure comprises 616 residues: Chaperone protein HscA (616 aa).

Belongs to the heat shock protein 70 family.

Chaperone involved in the maturation of iron-sulfur cluster-containing proteins. Has a low intrinsic ATPase activity which is markedly stimulated by HscB. Involved in the maturation of IscU. The polypeptide is Chaperone protein HscA (Escherichia fergusonii (strain ATCC 35469 / DSM 13698 / CCUG 18766 / IAM 14443 / JCM 21226 / LMG 7866 / NBRC 102419 / NCTC 12128 / CDC 0568-73)).